The following is a 322-amino-acid chain: Ferredoxin--NADP reductase (322 aa).

FAD is bound by residues aspartate 33, glutamine 41, tyrosine 46, alanine 86, phenylalanine 120, aspartate 278, and serine 319.

It belongs to the ferredoxin--NADP reductase type 2 family. In terms of assembly, homodimer. FAD serves as cofactor.

It catalyses the reaction 2 reduced [2Fe-2S]-[ferredoxin] + NADP(+) + H(+) = 2 oxidized [2Fe-2S]-[ferredoxin] + NADPH. This is Ferredoxin--NADP reductase from Salinispora tropica (strain ATCC BAA-916 / DSM 44818 / JCM 13857 / NBRC 105044 / CNB-440).